The sequence spans 773 residues: Polyribonucleotide nucleotidyltransferase (773 aa).

Mg(2+) is bound by residues aspartate 532 and aspartate 538. In terms of domain architecture, KH spans 598–657 (PRVITIKVPVDKIGEVIGPKGKVINAITEETGAQISIEDDGTVFVGATDGLSAQAAINKI). An S1 motif domain is found at 669 to 738 (GERFLGTVVK…KRGKISLVLV (70 aa)). The tract at residues 749-773 (APADAGAAQEFGSGTAPADAATASS) is disordered.

The protein belongs to the polyribonucleotide nucleotidyltransferase family. The cofactor is Mg(2+).

The protein localises to the cytoplasm. The catalysed reaction is RNA(n+1) + phosphate = RNA(n) + a ribonucleoside 5'-diphosphate. In terms of biological role, involved in mRNA degradation. Catalyzes the phosphorolysis of single-stranded polyribonucleotides processively in the 3'- to 5'-direction. This Mycobacterium leprae (strain Br4923) protein is Polyribonucleotide nucleotidyltransferase.